A 72-amino-acid polypeptide reads, in one-letter code: Translation initiation factor IF-1 (72 aa).

An S1-like domain is found at Met-1–Arg-72.

It belongs to the IF-1 family. As to quaternary structure, component of the 30S ribosomal translation pre-initiation complex which assembles on the 30S ribosome in the order IF-2 and IF-3, IF-1 and N-formylmethionyl-tRNA(fMet); mRNA recruitment can occur at any time during PIC assembly.

The protein localises to the cytoplasm. Functionally, one of the essential components for the initiation of protein synthesis. Stabilizes the binding of IF-2 and IF-3 on the 30S subunit to which N-formylmethionyl-tRNA(fMet) subsequently binds. Helps modulate mRNA selection, yielding the 30S pre-initiation complex (PIC). Upon addition of the 50S ribosomal subunit IF-1, IF-2 and IF-3 are released leaving the mature 70S translation initiation complex. This chain is Translation initiation factor IF-1, found in Shewanella frigidimarina (strain NCIMB 400).